Here is a 277-residue protein sequence, read N- to C-terminus: tRNA pseudouridine synthase A (277 aa).

Asp51 (nucleophile) is an active-site residue. Tyr109 provides a ligand contact to substrate.

It belongs to the tRNA pseudouridine synthase TruA family. Homodimer.

The enzyme catalyses uridine(38/39/40) in tRNA = pseudouridine(38/39/40) in tRNA. In terms of biological role, formation of pseudouridine at positions 38, 39 and 40 in the anticodon stem and loop of transfer RNAs. The sequence is that of tRNA pseudouridine synthase A from Nitrosomonas eutropha (strain DSM 101675 / C91 / Nm57).